Here is a 529-residue protein sequence, read N- to C-terminus: MLVLFETSVGYAIFKVLNEKKLQEVDSLWKEFETPEKANKIVKLKHFEKFQDTAEALAAFTALMEGKINKQLKKVLKKIVKEAHEPLAVADAKLGGVIKEKLNLSCIHSPVVNELMRGIRSQMDGLIPGVEPREMAAMCLGLAHSLSRYRLKFSADKVDTMIVQAISLLDDLDKELNNYIMRCREWYGWHFPELGKIISDNLTYCKCLQKVGDRKNYASAKLSELLPEEVEAEVKAAAEISMGTEVSEEDICNILHLCTQVIEISEYRTQLYEYLQNRMMAIAPNVTVMVGELVGARLIAHAGSLLNLAKHAASTVQILGAEKALFRALKSRRDTPKYGLIYHASLVGQTSPKHKGKISRMLAAKTVLAIRYDAFGEDSSSAMGVENRAKLEARLRTLEDRGIRKISGTGKALAKTEKYEHKSEVKTYDPSGDSTLPTCSKKRKIEQVDKEDEITEKKAKKAKIKVKVEEEEEEKVAEEEETSVKKKKKRGKKKHIKEEPLSEEEPCTSTAIASPEKKKKKKKKRENED.

Thr-34 is modified (phosphothreonine). Ser-109 carries the post-translational modification Phosphoserine. Residues 155–400 (ADKVDTMIVQ…LEARLRTLED (246 aa)) form a sufficient for interaction with NOPCHAP1 region. Lys-157 participates in a covalent cross-link: Glycyl lysine isopeptide (Lys-Gly) (interchain with G-Cter in SUMO2). The Nop domain occupies 282–400 (IAPNVTVMVG…LEARLRTLED (119 aa)). Residues Ser-304 and Ser-351 each carry the phosphoserine modification. Residues Lys-353, Lys-411, Lys-415, Lys-422, Lys-426, Lys-441, Lys-444, and Lys-465 each participate in a glycyl lysine isopeptide (Lys-Gly) (interchain with G-Cter in SUMO2) cross-link. Positions 409–529 (TGKALAKTEK…KKKKKRENED (121 aa)) are disordered. Basic and acidic residues predominate over residues 414–427 (AKTEKYEHKSEVKT). A Glycyl lysine isopeptide (Lys-Gly) (interchain with G-Cter in SUMO); alternate cross-link involves residue Lys-467. Residue Lys-467 forms a Glycyl lysine isopeptide (Lys-Gly) (interchain with G-Cter in SUMO1); alternate linkage. A Glycyl lysine isopeptide (Lys-Gly) (interchain with G-Cter in SUMO2); alternate cross-link involves residue Lys-467. Acidic residues predominate over residues 469-481 (EEEEEEKVAEEEE). Ser-483 carries the post-translational modification Phosphoserine. A Glycyl lysine isopeptide (Lys-Gly) (interchain with G-Cter in SUMO2) cross-link involves residue Lys-485. A compositionally biased stretch (basic residues) spans 485 to 495 (KKKKKRGKKKH). Residue Lys-497 forms a Glycyl lysine isopeptide (Lys-Gly) (interchain with G-Cter in SUMO); alternate linkage. Lys-497 is covalently cross-linked (Glycyl lysine isopeptide (Lys-Gly) (interchain with G-Cter in SUMO2); alternate). 2 positions are modified to phosphoserine: Ser-502 and Ser-514. The span at 517–529 (KKKKKKKKRENED) shows a compositional bias: basic residues.

It belongs to the NOP5/NOP56 family. As to quaternary structure, core component of box C/D small nucleolar ribonucleoprotein (snoRNP) particles; the core proteins SNU13, NOP56, NOP58 and FBL or FBLL1 assemble stepwise onto the snoRNA. Interacts with NOLC1/Nopp140. Interacts with NOPCHAP1, NUFIP1, RUVBL1 and RUVBL2; NOPCHAP1 bridges the association of NOP58 with RUVBL1:RUVBL2 and NUFIP1. Interacts with PIH1D1. Part of the small subunit (SSU) processome, composed of more than 70 proteins and the RNA chaperone small nucleolar RNA (snoRNA) U3. In terms of processing, sumoylation is essential for high-affinity binding to snoRNAs. In terms of tissue distribution, ubiquitous.

It is found in the nucleus. The protein resides in the nucleolus. It localises to the nucleoplasm. Its function is as follows. Required for the biogenesis of box C/D snoRNAs such as U3, U8 and U14 snoRNAs. Part of the small subunit (SSU) processome, first precursor of the small eukaryotic ribosomal subunit. During the assembly of the SSU processome in the nucleolus, many ribosome biogenesis factors, an RNA chaperone and ribosomal proteins associate with the nascent pre-rRNA and work in concert to generate RNA folding, modifications, rearrangements and cleavage as well as targeted degradation of pre-ribosomal RNA by the RNA exosome. Core component of box C/D small nucleolar ribonucleoprotein (snoRNP) complexes that function in methylation of multiple sites on ribosomal RNAs (rRNAs) and messenger RNAs (mRNAs). The polypeptide is Nucleolar protein 58 (Homo sapiens (Human)).